The chain runs to 430 residues: Enolase (430 aa).

Position 167 (Q167) interacts with (2R)-2-phosphoglycerate. Residue E209 is the Proton donor of the active site. 3 residues coordinate Mg(2+): D246, E289, and D316. The (2R)-2-phosphoglycerate site is built by K341, R370, S371, and K392. Residue K341 is the Proton acceptor of the active site.

It belongs to the enolase family. As to quaternary structure, component of the RNA degradosome, a multiprotein complex involved in RNA processing and mRNA degradation. Mg(2+) is required as a cofactor.

It is found in the cytoplasm. The protein localises to the secreted. Its subcellular location is the cell surface. The enzyme catalyses (2R)-2-phosphoglycerate = phosphoenolpyruvate + H2O. It functions in the pathway carbohydrate degradation; glycolysis; pyruvate from D-glyceraldehyde 3-phosphate: step 4/5. Functionally, catalyzes the reversible conversion of 2-phosphoglycerate (2-PG) into phosphoenolpyruvate (PEP). It is essential for the degradation of carbohydrates via glycolysis. This chain is Enolase, found in Idiomarina loihiensis (strain ATCC BAA-735 / DSM 15497 / L2-TR).